The sequence spans 571 residues: Streptolysin O (571 aa).

Positions 1-33 (MSNKKTFKKYSRVAGLLTAALIIGNLVTANAES) are cleaved as a signal peptide. Residues 30–108 (NAESNKQNTA…KKSEEDHTEE (79 aa)) form a disordered region. A compositionally biased stretch (low complexity) spans 37-48 (NTASTETTTTNE). 2 stretches are compositionally biased toward basic and acidic residues: residues 50-68 (PKPESSELTTEKAGQKTDD) and 79-108 (APKEMPLESAEKEEKKSEDKKKSEEDHTEE). A run of 4 beta stranded transmembrane segments spans residues 260 to 273 (KSQIEAALNVNSKI), 280 to 289 (IDFKSISKGE), 358 to 367 (SNDVEAAFSA), and 375 to 387 (KTNGKYSDILENS). Residues 529 to 539 (ECTGLAWEWWR) carry the Conserved undecapeptide motif. The Cholesterol binding signature appears at 561-562 (TL).

This sequence belongs to the cholesterol-dependent cytolysin family. Homooligomeric pore complex of 35 to 50 subunits; when inserted in the host membrane.

Its subcellular location is the secreted. The protein resides in the host cell membrane. A cholesterol-dependent toxin that causes cytolysis by forming pores in cholesterol containing host membranes. After binding to target membranes, the protein undergoes a major conformation change, leading to its insertion in the host membrane and formation of an oligomeric pore complex. Cholesterol is required for binding to host membranes, membrane insertion and pore formation; cholesterol binding is mediated by a Thr-Leu pair in the C-terminus. Can be reversibly inactivated by oxidation. This chain is Streptolysin O (slo), found in Streptococcus pyogenes serotype M18 (strain MGAS8232).